Consider the following 108-residue polypeptide: Resistin (108 aa).

A signal peptide spans 1 to 18; it reads MKALCLLLLPVLGLLVSS. Disulfide bonds link C51/C104, C63/C103, C72/C89, C74/C91, and C78/C93.

Belongs to the resistin/FIZZ family. Homodimer; disulfide-linked. Interacts with DEFA1. As to expression, expressed in white adipose tissue (at protein level). Widely expressed, with particularly strong expression in lung, bone marrow, breast and peripheral blood. Expressed strongly in bone marrow and at lower levels in lung, but not detected in other tissues. Isoform 2 is detected in adipose tissue, bone marrow, brain, lung, peripheral blood, placenta and thymus.

It is found in the secreted. Functionally, hormone that seems to suppress insulin ability to stimulate glucose uptake into adipose cells. Potentially links obesity to diabetes. Promotes chemotaxis in myeloid cells. The protein is Resistin (RETN) of Homo sapiens (Human).